The sequence spans 303 residues: Glycine--tRNA ligase alpha subunit (303 aa).

Belongs to the class-II aminoacyl-tRNA synthetase family. As to quaternary structure, tetramer of two alpha and two beta subunits.

It is found in the cytoplasm. The enzyme catalyses tRNA(Gly) + glycine + ATP = glycyl-tRNA(Gly) + AMP + diphosphate. The chain is Glycine--tRNA ligase alpha subunit from Escherichia fergusonii (strain ATCC 35469 / DSM 13698 / CCUG 18766 / IAM 14443 / JCM 21226 / LMG 7866 / NBRC 102419 / NCTC 12128 / CDC 0568-73).